The chain runs to 1213 residues: Probable ATP-binding protein BrxC (1213 aa).

Belongs to the BrxC family.

Its function is as follows. BREX systems (bacteriophage exclusion) provide immunity against bacteriophage. Part of a type 1 BREX system which protects against dsDNA phage. This system allows phage adsorption but prevents phage DNA replication, without degradation of the phage DNA. Methylation of bacterial DNA by PglX guides self/non-self discrimination. When the brxA-brxB-brxC-pglX-pglZ-brxL genes are transformed into a susceptible E.coli strain (BW25113) they confer very high resistance to infection by bacteriophage VR7 and VpaE1, about 100-fold protection against lambda, T5 and T7 and no protection against RNA phage Qbeta, ssDNA phage M13 or dSDNA phage T4 and VR5. Glycosylated phage DNA is not susceptible to BREX. The BREX system does not confer resistance to lysogenic lambda phage, i.e. prophage that are integrated into the chromosomal DNA and then induced to form phage. This chain is Probable ATP-binding protein BrxC, found in Escherichia coli O9:H4 (strain HS).